A 681-amino-acid chain; its full sequence is Terpene synthase 6, chloroplastic (681 aa).

4 residues coordinate Mg(2+): D433, D437, N577, and E585. Residues D433 to D437 carry the DDXXD motif motif.

Belongs to the terpene synthase family. Mg(2+) serves as cofactor. Expressed in leaves.

The protein localises to the plastid. It localises to the chloroplast. It functions in the pathway secondary metabolite biosynthesis; terpenoid biosynthesis. In terms of biological role, may be involved in the biosynthesis of ent-kaurene diterpenoids natural products such as oridonin, miltiradiene, eriocalyxin B and nezukol, known to exhibit antitumor, anti-inflammatory and antibacterial activities. This is Terpene synthase 6, chloroplastic from Isodon rubescens (Rabdosia rubescens).